A 106-amino-acid chain; its full sequence is UPF0060 membrane protein Rleg2_1018 (106 aa).

The next 4 membrane-spanning stretches (helical) occupy residues isoleucine 4–leucine 24, valine 30–valine 50, threonine 58–glutamate 78, and aspartate 86–glycine 106.

This sequence belongs to the UPF0060 family.

The protein localises to the cell inner membrane. The polypeptide is UPF0060 membrane protein Rleg2_1018 (Rhizobium leguminosarum bv. trifolii (strain WSM2304)).